Here is a 230-residue protein sequence, read N- to C-terminus: 2,3-bisphosphoglycerate-dependent phosphoglycerate mutase 2 (230 aa).

Substrate contacts are provided by residues 8–15 (RHGQSEWN), 21–22 (TG), Arg-60, 87–90 (ERHY), Lys-98, 114–115 (RR), and 183–184 (GN). His-9 (tele-phosphohistidine intermediate) is an active-site residue. The Proton donor/acceptor role is filled by Glu-87.

The protein belongs to the phosphoglycerate mutase family. BPG-dependent PGAM subfamily.

The catalysed reaction is (2R)-2-phosphoglycerate = (2R)-3-phosphoglycerate. The protein operates within carbohydrate degradation; glycolysis; pyruvate from D-glyceraldehyde 3-phosphate: step 3/5. Its function is as follows. Catalyzes the interconversion of 2-phosphoglycerate and 3-phosphoglycerate. This chain is 2,3-bisphosphoglycerate-dependent phosphoglycerate mutase 2, found in Lactiplantibacillus plantarum (strain ATCC BAA-793 / NCIMB 8826 / WCFS1) (Lactobacillus plantarum).